Consider the following 177-residue polypeptide: Platelet glycoprotein IX (177 aa).

A signal peptide spans 1-16 (MPAWGALFLLWATAEA). Residues 17 to 51 (TKDCPSPCTCRALETMGLWVDCRGHGLTALPALPA) enclose the LRRNT domain. At 17-147 (TKDCPSPCTC…QLQASWVRPG (131 aa)) the chain is on the extracellular side. Asn60 is a glycosylation site (N-linked (GlcNAc...) asparagine). The stretch at 60 to 83 (NNSLQSVPPGAFDHLPQLQTLDVT) is one LRR repeat. The LRRCT domain occupies 85–137 (NPWHCDCSLTYLRLWLEDRTPEALLQVRCASPSLAAHGPLGRLTGYQLGSCGW). A helical membrane pass occupies residues 148-168 (VLWDVALVAVAALGLALLAGL). The Cytoplasmic segment spans residues 169–177 (LCATTEALD).

In terms of assembly, two GP-Ib beta are disulfide-linked to one GP-Ib alpha. GP-IX is complexed with the GP-Ib heterodimer via a non covalent linkage.

It localises to the membrane. The GPIb-V-IX complex functions as the vWF receptor and mediates vWF-dependent platelet adhesion to blood vessels. The adhesion of platelets to injured vascular surfaces in the arterial circulation is a critical initiating event in hemostasis. GP-IX may provide for membrane insertion and orientation of GP-Ib. The sequence is that of Platelet glycoprotein IX (GP9) from Homo sapiens (Human).